The chain runs to 398 residues: Histidinol dehydrogenase (398 aa).

Residues Tyr114, Gln176, and Asn199 each coordinate NAD(+). Substrate-binding residues include Thr222, Gln244, and His247. 2 residues coordinate Zn(2+): Gln244 and His247. Residues Glu298 and His299 each act as proton acceptor in the active site. His299, Asp331, Glu384, and His389 together coordinate substrate. Position 331 (Asp331) interacts with Zn(2+). His389 is a Zn(2+) binding site.

It belongs to the histidinol dehydrogenase family. Zn(2+) is required as a cofactor.

It catalyses the reaction L-histidinol + 2 NAD(+) + H2O = L-histidine + 2 NADH + 3 H(+). The protein operates within amino-acid biosynthesis; L-histidine biosynthesis; L-histidine from 5-phospho-alpha-D-ribose 1-diphosphate: step 9/9. Its function is as follows. Catalyzes the sequential NAD-dependent oxidations of L-histidinol to L-histidinaldehyde and then to L-histidine. The sequence is that of Histidinol dehydrogenase (hisD) from Saccharolobus solfataricus (strain ATCC 35092 / DSM 1617 / JCM 11322 / P2) (Sulfolobus solfataricus).